A 424-amino-acid polypeptide reads, in one-letter code: Calreticulin-3 (424 aa).

The signal sequence occupies residues 1-28; sequence MGLPQNKLSFFCFFFLVSVLTLAPLAFS. Asn97 carries N-linked (GlcNAc...) asparagine glycosylation. A disulfide bridge connects residues Cys114 and Cys146. An alpha-D-glucoside is bound by residues Tyr118, Lys120, Tyr137, and Asp144. A run of 7 repeats spans residues 200 to 211, 219 to 230, 236 to 247, 254 to 265, 269 to 279, 283 to 293, and 297 to 307. The 4 X approximate repeats stretch occupies residues 200–265; that stretch reads REFGSMYTDW…KAKEPEDWDE (66 aa). A compositionally biased stretch (acidic residues) spans 228 to 237; sequence WDDREYIDDP. Residues 228–275 form a disordered region; it reads WDDREYIDDPNDVKPEGFDSIPREIPDRKAKEPEDWDEEENGLWEPPK. The segment covering 238-260 has biased composition (basic and acidic residues); that stretch reads NDVKPEGFDSIPREIPDRKAKEP. The segment at 269-307 is 3 X approximate repeats; the sequence is GLWEPPKIPNSAYKGPWKAKRIKNPNYKGKWKNPWIDNP. Glu327 serves as a coordination point for an alpha-D-glucoside. Positions 368–401 are enriched in basic and acidic residues; the sequence is FAEAEKERKAREDEEARIAREEGERRRKERDHRY. Positions 368–424 are disordered; the sequence is FAEAEKERKAREDEEARIAREEGERRRKERDHRYGDRRRRYKRPNPRDYMDDYHDEL. A compositionally biased stretch (basic residues) spans 402–411; it reads GDRRRRYKRP. Residues 412–424 show a composition bias toward basic and acidic residues; that stretch reads NPRDYMDDYHDEL. The Prevents secretion from ER motif lies at 421–424; it reads HDEL.

It belongs to the calreticulin family.

The protein resides in the endoplasmic reticulum lumen. Its function is as follows. Molecular calcium-binding chaperone promoting folding, oligomeric assembly and quality control in the ER via the calreticulin/calnexin cycle. This lectin may interact transiently with almost all of the monoglucosylated glycoproteins that are synthesized in the ER. Required for elongation factor Tu receptor (EFR) accumulation and for EFR, but not flagellin-sensing 2 (FLS2) signaling. The chain is Calreticulin-3 (CRT3) from Arabidopsis thaliana (Mouse-ear cress).